A 146-amino-acid polypeptide reads, in one-letter code: Monothiol glutaredoxin-5, mitochondrial (146 aa).

Positions 26-131 constitute a Glutaredoxin domain; it reads RQALEQAVKE…KILKEINALA (106 aa). Position 43 (K43) interacts with glutathione. [2Fe-2S] cluster is bound at residue C51. Residues 83-87, I95, and 108-109 contribute to the glutathione site; these read REGIK and SD.

The protein belongs to the glutaredoxin family. Monothiol subfamily. As to quaternary structure, homodimer. Interacts with ISA1 and ISA2.

The protein resides in the mitochondrion. In terms of biological role, monothiol glutaredoxin involved in mitochondrial iron-sulfur (Fe/S) cluster transfer. Receives 2Fe/2S clusters from scaffold protein isu1 and mediates their transfer to apoproteins, to the 4Fe/FS cluster biosynthesis machinery, or export from mitochondrion. This Schizosaccharomyces pombe (strain 972 / ATCC 24843) (Fission yeast) protein is Monothiol glutaredoxin-5, mitochondrial.